The primary structure comprises 344 residues: Small neutral protease regulatory protein (344 aa).

Positions 1–60 (MELEVRHLRALCAIADAGSLHRAARRLGVAQPTLSTQLTRIEQALGGPLFTRERTGCRPT) constitute an HTH lysR-type domain. Positions 20-39 (LHRAARRLGVAQPTLSTQLT) form a DNA-binding region, H-T-H motif. The segment at 322 to 344 (SCGRAEGSRSRRPRDVAPPRPIG) is disordered. Over residues 327–338 (EGSRSRRPRDVA) the composition is skewed to basic and acidic residues.

Belongs to the LysR transcriptional regulatory family.

In terms of biological role, transcriptional activator of the gene (snpA) for the small neutral protease. In Streptomyces lividans, this protein is Small neutral protease regulatory protein (mprR).